We begin with the raw amino-acid sequence, 217 residues long: GTP cyclohydrolase 1 (217 aa).

The Zn(2+) site is built by Cys-109, His-112, and Cys-180.

This sequence belongs to the GTP cyclohydrolase I family. In terms of assembly, homomer.

The catalysed reaction is GTP + H2O = 7,8-dihydroneopterin 3'-triphosphate + formate + H(+). The protein operates within cofactor biosynthesis; 7,8-dihydroneopterin triphosphate biosynthesis; 7,8-dihydroneopterin triphosphate from GTP: step 1/1. The polypeptide is GTP cyclohydrolase 1 (Aliivibrio salmonicida (strain LFI1238) (Vibrio salmonicida (strain LFI1238))).